Consider the following 352-residue polypeptide: MGDWEFLEKLLDQVQEHSTSIGKIWLMVLFIFRILILGLAGESVWGDEQSDFICNTEQPGCTNVCYDKAFPISHVRYWVLQFLFVSTPTLFYLGHVIYLSRREEKLKQKESELRALDDKEQVEQAIAIIEKKKMKLYIQEDGTVKIKGALMCTYLTSVIFKSLFEAGFLLGQWYLYGFVMTPIYVCERVPCPHKVDCFVSRPMEKTIFIVFMLVVSLISLFLNVLELIHLVCKSMIDTLKKYSPYVPPNRYPKNEDTYPEKTSETATAPFQDKSYIYLPMNDNISYPQYKMPNEQNWANFNTEHQLAISGNNQSPLGHYSLSAFVPVPPKTHSTMEKPSTRASSSASKKQYV.

At 2–23 the chain is on the cytoplasmic side; the sequence is GDWEFLEKLLDQVQEHSTSIGK. Residues 24 to 46 traverse the membrane as a helical segment; that stretch reads IWLMVLFIFRILILGLAGESVWG. The Extracellular segment spans residues 47–76; that stretch reads DEQSDFICNTEQPGCTNVCYDKAFPISHVR. The chain crosses the membrane as a helical span at residues 77-99; that stretch reads YWVLQFLFVSTPTLFYLGHVIYL. At 100 to 153 the chain is on the cytoplasmic side; the sequence is SRREEKLKQKESELRALDDKEQVEQAIAIIEKKKMKLYIQEDGTVKIKGALMCT. A helical membrane pass occupies residues 154–176; the sequence is YLTSVIFKSLFEAGFLLGQWYLY. At 177-208 the chain is on the extracellular side; the sequence is GFVMTPIYVCERVPCPHKVDCFVSRPMEKTIF. The helical transmembrane segment at 209–231 threads the bilayer; that stretch reads IVFMLVVSLISLFLNVLELIHLV. Residues 232-352 lie on the Cytoplasmic side of the membrane; that stretch reads CKSMIDTLKK…SSSASKKQYV (121 aa). Residues 330 to 352 are disordered; that stretch reads KTHSTMEKPSTRASSSASKKQYV. Residues 340-352 show a composition bias toward polar residues; the sequence is TRASSSASKKQYV.

It belongs to the connexin family. Alpha-type (group II) subfamily. As to quaternary structure, a connexon is composed of a hexamer of connexins.

The protein resides in the cell membrane. It is found in the cell junction. It localises to the gap junction. Functionally, one gap junction consists of a cluster of closely packed pairs of transmembrane channels, the connexons, through which materials of low MW diffuse from one cell to a neighboring cell. The polypeptide is Gap junction alpha-4 protein (gja4) (Xenopus tropicalis (Western clawed frog)).